We begin with the raw amino-acid sequence, 82 residues long: Small ribosomal subunit protein bS20 (82 aa).

The protein belongs to the bacterial ribosomal protein bS20 family.

In terms of biological role, binds directly to 16S ribosomal RNA. This chain is Small ribosomal subunit protein bS20, found in Streptococcus pyogenes serotype M12 (strain MGAS2096).